The following is a 134-amino-acid chain: Nif-regulating protein A (134 aa).

A C4-type; atypical zinc finger spans residues 3–36 (CLECGLVYIVSGLKVPEKISVRVFVNRIEHPFTH).

Interacts with the general archaeal transcription factors TBPs.

Functionally, involved in nitrogen regulation. Enhances the transcription of the nitrogen fixation (nif) operon under nitrogen-limited conditions. Acts by binding to the nifH promoter region. This is Nif-regulating protein A from Methanosarcina mazei (strain ATCC BAA-159 / DSM 3647 / Goe1 / Go1 / JCM 11833 / OCM 88) (Methanosarcina frisia).